Reading from the N-terminus, the 458-residue chain is UPF0210 protein Mevan_0738 (458 aa).

This sequence belongs to the UPF0210 family.

The sequence is that of UPF0210 protein Mevan_0738 from Methanococcus vannielii (strain ATCC 35089 / DSM 1224 / JCM 13029 / OCM 148 / SB).